Reading from the N-terminus, the 187-residue chain is Ribosome-recycling factor (187 aa).

This sequence belongs to the RRF family.

The protein localises to the cytoplasm. In terms of biological role, responsible for the release of ribosomes from messenger RNA at the termination of protein biosynthesis. May increase the efficiency of translation by recycling ribosomes from one round of translation to another. The polypeptide is Ribosome-recycling factor (Methylobacterium sp. (strain 4-46)).